A 1379-amino-acid chain; its full sequence is Increased rDNA silencing protein 4 homolog (1379 aa).

Disordered regions lie at residues 1–25, 138–159, 240–314, 337–370, 534–573, 768–816, 1047–1110, and 1168–1208; these read MDAI…RNLS, TSTR…HHPR, EFDF…PLPS, SQPF…QAIM, ASKR…ASQQ, TDLH…NDIG, DAPS…KDSQ, and AVHE…DGKY. The span at 250-259 shows a compositional bias: basic and acidic residues; it reads PSDKNLEKLK. A compositionally biased stretch (polar residues) spans 262-287; it reads ASKQASESQSLKNMESLSLARSSPIL. The segment covering 541–555 has biased composition (low complexity); the sequence is SQQTESASKSSSNIS. A compositionally biased stretch (polar residues) spans 562-573; the sequence is PPSNFSISASQQ. Residues 770–780 show a composition bias toward basic residues; it reads LHRKPRRKHKS. A compositionally biased stretch (acidic residues) spans 793–802; it reads DESPQSDEVE. Residues 1240-1329 enclose the EH domain; it reads AANKGYLLSK…DSVWLSSKRM (90 aa). The 36-residue stretch at 1273-1308 folds into the EF-hand domain; it reads APTSVLAKIYDLVDRHHTGVLGRDEFIVGMFLIDQY.

It belongs to the IRS4 family.

Positive regulator of phosphatidylinositol 4,5-bisphosphate turnover and negatively regulates signaling through the cell integrity pathway. Involved in rDNA silencing. In Schizosaccharomyces pombe (strain 972 / ATCC 24843) (Fission yeast), this protein is Increased rDNA silencing protein 4 homolog.